Here is a 54-residue protein sequence, read N- to C-terminus: Ovomucoid (54 aa).

The region spanning 4-54 (VDCSDYPKPVCPLDYMPLCGSDSKTYSNKCNFCNAVVESSGTLTLRHFGKC) is the Kazal-like domain. 3 disulfides stabilise this stretch: Cys6–Cys36, Cys14–Cys33, and Cys22–Cys54.

In terms of processing, this is the only ovomucoid third domain known to be not glycosylated.

It is found in the secreted. The polypeptide is Ovomucoid (Struthio camelus (Common ostrich)).